Here is an 801-residue protein sequence, read N- to C-terminus: Mitochondrial intermediate peptidase (801 aa).

The N-terminal 41 residues, 1 to 41 (MKDQLLVPLRRRPWTCQKCLQRLQLPRHQTRRSFETAASPF), are a transit peptide targeting the mitochondrion. His564 contributes to the Zn(2+) binding site. The active site involves Glu565. Residues His568 and His571 each contribute to the Zn(2+) site.

The protein belongs to the peptidase M3 family. It depends on Zn(2+) as a cofactor.

Its subcellular location is the mitochondrion matrix. The enzyme catalyses Release of an N-terminal octapeptide as second stage of processing of some proteins imported into the mitochondrion.. In terms of biological role, cleaves proteins, imported into the mitochondrion, to their mature size. While most mitochondrial precursor proteins are processed to the mature form in one step by mitochondrial processing peptidase (MPP), the sequential cleavage by MIP of an octapeptide after initial processing by MPP is a required step for a subgroup of nuclear-encoded precursor proteins destined for the matrix or the inner membrane. In Aspergillus fumigatus (strain CBS 144.89 / FGSC A1163 / CEA10) (Neosartorya fumigata), this protein is Mitochondrial intermediate peptidase (oct1).